A 211-amino-acid chain; its full sequence is Large ribosomal subunit protein uL3 (211 aa).

The tract at residues 125 to 148 (GPASHGSKKWHRRPGSIGQRKTPG) is disordered.

This sequence belongs to the universal ribosomal protein uL3 family. In terms of assembly, part of the 50S ribosomal subunit. Forms a cluster with proteins L14 and L19. Also contacts proteins L13 and L17.

Its function is as follows. One of the primary rRNA binding proteins, it binds directly near the 3'-end of the 23S rRNA, where it nucleates assembly of the 50S subunit. The chain is Large ribosomal subunit protein uL3 (rplC) from Deinococcus radiodurans (strain ATCC 13939 / DSM 20539 / JCM 16871 / CCUG 27074 / LMG 4051 / NBRC 15346 / NCIMB 9279 / VKM B-1422 / R1).